Consider the following 156-residue polypeptide: Protein BUNDLE SHEATH DEFECTIVE 2, chloroplastic (156 aa).

The transit peptide at 1 to 41 directs the protein to the chloroplast; the sequence is MNSAALNARTASVAPQPQACHACKCRQLLSRRVPPAQRQVE. Residues C78, C81, C89, C92, C133, C136, C144, and C147 each contribute to the Zn(2+) site.

The protein belongs to the BSD2 chaperone family. In terms of assembly, interacts with the RuBisCo large subunit (RbcL) assembled as an intermediate complex made of eight RbcL and eight BSD2 subunits.

It is found in the plastid. It localises to the chloroplast stroma. Functionally, chloroplast chaperone required for RuBisCo biogenesis and translational regulation of the RuBisCo large subunit (RbcL). Stabilizes an end-state assembly intermediate of eight RbcL subunits until the small subunits (RBCSs) become available to produce a complete stable RuBisCo complex containing eight small and eight large subunits. This chain is Protein BUNDLE SHEATH DEFECTIVE 2, chloroplastic, found in Chlamydomonas reinhardtii (Chlamydomonas smithii).